The chain runs to 277 residues: Proteasome subunit beta type-7 (277 aa).

Positions 1–43 are cleaved as a propeptide — removed in mature form; sequence MAAVSVYERPVGGFSFDNCRRNAVLEADFAKKGYKLPTARKTG. Catalysis depends on Thr-44, which acts as the Nucleophile.

It belongs to the peptidase T1B family. The 26S proteasome consists of a 20S proteasome core and two 19S regulatory subunits. The 20S proteasome core is a barrel-shaped complex made of 28 subunits that are arranged in four stacked rings. The two outer rings are each formed by seven alpha subunits, and the two inner rings are formed by seven beta subunits. The proteolytic activity is exerted by three beta-subunits PSMB5, PSMB6 and PSMB7.

The protein resides in the cytoplasm. Its subcellular location is the nucleus. The catalysed reaction is Cleavage of peptide bonds with very broad specificity.. Functionally, component of the 20S core proteasome complex involved in the proteolytic degradation of most intracellular proteins. This complex plays numerous essential roles within the cell by associating with different regulatory particles. Associated with two 19S regulatory particles, forms the 26S proteasome and thus participates in the ATP-dependent degradation of ubiquitinated proteins. The 26S proteasome plays a key role in the maintenance of protein homeostasis by removing misfolded or damaged proteins that could impair cellular functions, and by removing proteins whose functions are no longer required. Associated with the PA200 or PA28, the 20S proteasome mediates ubiquitin-independent protein degradation. This type of proteolysis is required in several pathways including spermatogenesis (20S-PA200 complex) or generation of a subset of MHC class I-presented antigenic peptides (20S-PA28 complex). Within the 20S core complex, PSMB7 displays a trypsin-like activity. The protein is Proteasome subunit beta type-7 (PSMB7) of Bos taurus (Bovine).